The sequence spans 121 residues: UPF0344 protein BCG9842_B4136 (121 aa).

Helical transmembrane passes span 6-26 (ITAW…YSAG), 38-58 (LMYI…VKTA), 65-85 (WYGL…MVLV), and 92-112 (PTGA…YLGL).

This sequence belongs to the UPF0344 family.

Its subcellular location is the cell membrane. The polypeptide is UPF0344 protein BCG9842_B4136 (Bacillus cereus (strain G9842)).